The following is a 284-amino-acid chain: ATP synthase subunit a (284 aa).

5 helical membrane-spanning segments follow: residues 47-67 (AFHL…LIFF), 108-128 (VAPL…MDLV), 156-176 (VPTA…ILII), 233-253 (MIFI…SLPW), and 254-274 (AIFH…LVIV).

This sequence belongs to the ATPase A chain family. F-type ATPases have 2 components, CF(1) - the catalytic core - and CF(0) - the membrane proton channel. CF(1) has five subunits: alpha(3), beta(3), gamma(1), delta(1), epsilon(1). CF(0) has three main subunits: a(1), b(2) and c(9-12). The alpha and beta chains form an alternating ring which encloses part of the gamma chain. CF(1) is attached to CF(0) by a central stalk formed by the gamma and epsilon chains, while a peripheral stalk is formed by the delta and b chains.

It localises to the cell inner membrane. Functionally, key component of the proton channel; it plays a direct role in the translocation of protons across the membrane. In Ruthia magnifica subsp. Calyptogena magnifica, this protein is ATP synthase subunit a.